The following is a 584-amino-acid chain: MDKGKENRAQGVLKRISGPVVTAVGLDAHMYDVVKVGNEELMGEVIKIQGENIIIQVYEDTAGIRPGESVGNTGLSLAVELGPGLLTSIYDGIQRPLEVLVDKMGNFIERGVSAPGLSHEKKWEFVPTVKKGDEVKAGDILGTVQETNIVHKVMVPPKAKGGKIKKISGGSFTVDETVCVLEDGTEIAMLQRWPVRVPRPVTQKLNPDIPLITGQRILDGLFPIAKGGTAAIPGPFGSGKTVTQQQLAKWSDAEIVVYIGCGERGNEMTEVLTEFPELEDPKTGKPLMERTVLIANTSNMPVAAREASVYTGITIAEYFRDMGYDVSLMADSTSRWAEAMREISSRLEEMPGEEGYPAYLAARLSEFYERAGRVISLNGEGGSVSVIGAVSPPGGDFSEPVTQNTLRIVKVFWALDAKLSQRRHFPAINWLNSYSLYLDALNEWYDKEVSPEWNPLRAWAMGVLQKEAELQEIVQLVGSDALPDEEQVTIEVARMIREIFLQQNAYDAVDTFCPMSKQYDMMKAIKHYADLARTAQTGGATPQQVIGIRSKNELPQIKFIRDYEPELAKIMKDMEAEFDAMRAV.

ATP is bound at residue 234-241; it reads GPFGSGKT.

This sequence belongs to the ATPase alpha/beta chains family. Has multiple subunits with at least A(3), B(3), C, D, E, F, H, I and proteolipid K(x).

It is found in the cell membrane. The enzyme catalyses ATP + H2O + 4 H(+)(in) = ADP + phosphate + 5 H(+)(out). Functionally, component of the A-type ATP synthase that produces ATP from ADP in the presence of a proton gradient across the membrane. The A chain is the catalytic subunit. The chain is A-type ATP synthase subunit A from Methanoculleus marisnigri (strain ATCC 35101 / DSM 1498 / JR1).